Reading from the N-terminus, the 368-residue chain is Propane 2-monooxygenase, hydroxylase component small subunit (368 aa).

Belongs to the TmoE/XamoE family. The propane 2-monooxygenase multicomponent enzyme system is composed of an electron transfer component and a monooxygenase component interacting with the effector protein MimD. The electron transfer component is composed of a reductase (MimB), and the monooxygenase component is formed by a large subunit (MimA) and a small subunit (MimC). Requires the presence of the chaperonin-like protein MimG to ensure a productive folding, resulting of a soluble MimC, which leads to the active form of MimABCD.

It catalyses the reaction propane + NADH + O2 + H(+) = propan-2-ol + NAD(+) + H2O. It carries out the reaction acetone + NADH + O2 + H(+) = hydroxyacetone + NAD(+) + H2O. The catalysed reaction is butan-2-one + NADH + O2 + H(+) = 1-hydroxy-2-butanone + NAD(+) + H2O. The enzyme catalyses phenol + NADH + O2 + H(+) = hydroquinone + NAD(+) + H2O. In terms of biological role, component of the propane 2-monooxygenase multicomponent enzyme system which is involved in the degradation of propane via the O2-dependent hydroxylation of propane. Also involved in the degradation of acetone via the O2-dependent hydroxylation of acetone. Also able to catalyze the oxidation of phenol, methylethylketone (2-butanone), 1-propanol and 2-propanol. This Mycolicibacterium goodii (Mycobacterium goodii) protein is Propane 2-monooxygenase, hydroxylase component small subunit.